Consider the following 416-residue polypeptide: UDP-N-acetylglucosamine 1-carboxyvinyltransferase (416 aa).

22–23 (KN) provides a ligand contact to phosphoenolpyruvate. UDP-N-acetyl-alpha-D-glucosamine is bound at residue arginine 92. Catalysis depends on cysteine 116, which acts as the Proton donor. Residue cysteine 116 is modified to 2-(S-cysteinyl)pyruvic acid O-phosphothioketal. UDP-N-acetyl-alpha-D-glucosamine is bound by residues 121–125 (RPIDQ), aspartate 304, and isoleucine 326.

Belongs to the EPSP synthase family. MurA subfamily.

It is found in the cytoplasm. The catalysed reaction is phosphoenolpyruvate + UDP-N-acetyl-alpha-D-glucosamine = UDP-N-acetyl-3-O-(1-carboxyvinyl)-alpha-D-glucosamine + phosphate. Its pathway is cell wall biogenesis; peptidoglycan biosynthesis. Functionally, cell wall formation. Adds enolpyruvyl to UDP-N-acetylglucosamine. In Desulfatibacillum aliphaticivorans, this protein is UDP-N-acetylglucosamine 1-carboxyvinyltransferase.